Consider the following 47-residue polypeptide: Antimicrobial peptide LCI (47 aa).

The protein localises to the secreted. Its function is as follows. Has antibacterial activity against X.oryzae pv oryzae and R.solanacearum, but not E.coli or P.carotovorum subsp carotovorum. May bind DNA or mRNA. This chain is Antimicrobial peptide LCI, found in Bacillus subtilis.